The chain runs to 38 residues: Photosystem II reaction center protein L (38 aa).

The helical transmembrane segment at 17–37 (SLYWGLLLIFVLAVLFSNYFF) threads the bilayer.

The protein belongs to the PsbL family. As to quaternary structure, PSII is composed of 1 copy each of membrane proteins PsbA, PsbB, PsbC, PsbD, PsbE, PsbF, PsbH, PsbI, PsbJ, PsbK, PsbL, PsbM, PsbT, PsbX, PsbY, PsbZ, Psb30/Ycf12, at least 3 peripheral proteins of the oxygen-evolving complex and a large number of cofactors. It forms dimeric complexes.

It localises to the plastid. Its subcellular location is the chloroplast thylakoid membrane. Its function is as follows. One of the components of the core complex of photosystem II (PSII). PSII is a light-driven water:plastoquinone oxidoreductase that uses light energy to abstract electrons from H(2)O, generating O(2) and a proton gradient subsequently used for ATP formation. It consists of a core antenna complex that captures photons, and an electron transfer chain that converts photonic excitation into a charge separation. This subunit is found at the monomer-monomer interface and is required for correct PSII assembly and/or dimerization. This chain is Photosystem II reaction center protein L, found in Adiantum capillus-veneris (Maidenhair fern).